Reading from the N-terminus, the 29-residue chain is Varv peptide F (29 aa).

The segment at residues Gly1 to Asn29 is a cross-link (cyclopeptide (Gly-Asn)). Intrachain disulfides connect Cys5-Cys19, Cys9-Cys21, and Cys14-Cys26.

This is a cyclic peptide.

Its function is as follows. Probably participates in a plant defense mechanism. Has cytotoxic activity against a variety of drug-resistant and drug-sensitive human tumor cell lines. The chain is Varv peptide F from Viola arvensis (European field pansy).